A 123-amino-acid polypeptide reads, in one-letter code: Large ribosomal subunit protein bL12 (123 aa).

It belongs to the bacterial ribosomal protein bL12 family. Homodimer. Part of the ribosomal stalk of the 50S ribosomal subunit. Forms a multimeric L10(L12)X complex, where L10 forms an elongated spine to which 2 to 4 L12 dimers bind in a sequential fashion. Binds GTP-bound translation factors.

In terms of biological role, forms part of the ribosomal stalk which helps the ribosome interact with GTP-bound translation factors. Is thus essential for accurate translation. The protein is Large ribosomal subunit protein bL12 of Bartonella bacilliformis (strain ATCC 35685 / KC583 / Herrer 020/F12,63).